The primary structure comprises 118 residues: Large ribosomal subunit protein bL20 (118 aa).

Belongs to the bacterial ribosomal protein bL20 family.

Binds directly to 23S ribosomal RNA and is necessary for the in vitro assembly process of the 50S ribosomal subunit. It is not involved in the protein synthesizing functions of that subunit. This is Large ribosomal subunit protein bL20 from Francisella tularensis subsp. holarctica (strain FTNF002-00 / FTA).